The sequence spans 992 residues: UPF0182 protein MT3285 (992 aa).

The next 7 helical transmembrane spans lie at 17-39, 59-81, 113-135, 169-191, 212-229, 255-277, and 284-306; these read RILI…LIDA, LATR…FGGL, LVGI…SYWA, LMLS…AHYI, LVSL…AYWL, VLPA…FSAI, and IPAI…WPLI. Residues 906–938 are disordered; that stretch reads PTEAAVPPSPAANPPPPASGPQPPPVTAAPPVP. Pro residues predominate over residues 912-938; sequence PPSPAANPPPPASGPQPPPVTAAPPVP.

It belongs to the UPF0182 family.

The protein resides in the cell membrane. This is UPF0182 protein MT3285 from Mycobacterium tuberculosis (strain CDC 1551 / Oshkosh).